The following is a 498-amino-acid chain: ATP synthase subunit beta, chloroplastic (498 aa).

Residue 172–179 (GGAGVGKT) coordinates ATP.

The protein belongs to the ATPase alpha/beta chains family. As to quaternary structure, F-type ATPases have 2 components, CF(1) - the catalytic core - and CF(0) - the membrane proton channel. CF(1) has five subunits: alpha(3), beta(3), gamma(1), delta(1), epsilon(1). CF(0) has four main subunits: a(1), b(1), b'(1) and c(9-12).

The protein localises to the plastid. It localises to the chloroplast thylakoid membrane. The enzyme catalyses ATP + H2O + 4 H(+)(in) = ADP + phosphate + 5 H(+)(out). In terms of biological role, produces ATP from ADP in the presence of a proton gradient across the membrane. The catalytic sites are hosted primarily by the beta subunits. This chain is ATP synthase subunit beta, chloroplastic, found in Gossypium barbadense (Sea Island cotton).